The primary structure comprises 61 residues: Large ribosomal subunit protein uL30 (61 aa).

The protein belongs to the universal ribosomal protein uL30 family. In terms of assembly, part of the 50S ribosomal subunit.

This is Large ribosomal subunit protein uL30 from Chlorobium phaeobacteroides (strain DSM 266 / SMG 266 / 2430).